A 591-amino-acid polypeptide reads, in one-letter code: Coiled-coil domain-containing protein 148 (591 aa).

Coiled coils occupy residues 166–195 (VKKQ…SIKI), 352–417 (MLAK…KKKK), and 466–498 (ERRL…KQVA).

The polypeptide is Coiled-coil domain-containing protein 148 (CCDC148) (Homo sapiens (Human)).